We begin with the raw amino-acid sequence, 479 residues long: Ribosomal RNA small subunit methyltransferase F (479 aa).

S-adenosyl-L-methionine-binding positions include 125-131 (AAAPGSK), E149, D176, and D194. C247 (nucleophile) is an active-site residue.

It belongs to the class I-like SAM-binding methyltransferase superfamily. RsmB/NOP family.

The protein localises to the cytoplasm. It catalyses the reaction cytidine(1407) in 16S rRNA + S-adenosyl-L-methionine = 5-methylcytidine(1407) in 16S rRNA + S-adenosyl-L-homocysteine + H(+). Its function is as follows. Specifically methylates the cytosine at position 1407 (m5C1407) of 16S rRNA. In Escherichia coli (strain SE11), this protein is Ribosomal RNA small subunit methyltransferase F.